The primary structure comprises 55 residues: Large ribosomal subunit protein bL33 (55 aa).

The protein belongs to the bacterial ribosomal protein bL33 family.

The polypeptide is Large ribosomal subunit protein bL33 (rpmG) (Buchnera aphidicola subsp. Acyrthosiphon pisum (strain APS) (Acyrthosiphon pisum symbiotic bacterium)).